The chain runs to 189 residues: Potassium-transporting ATPase KdpC subunit (189 aa).

A helical membrane pass occupies residues 11–31; the sequence is LFVLLTVITGVLYPVFVTGLA.

This sequence belongs to the KdpC family. As to quaternary structure, the system is composed of three essential subunits: KdpA, KdpB and KdpC.

The protein localises to the cell inner membrane. Its function is as follows. Part of the high-affinity ATP-driven potassium transport (or Kdp) system, which catalyzes the hydrolysis of ATP coupled with the electrogenic transport of potassium into the cytoplasm. This subunit acts as a catalytic chaperone that increases the ATP-binding affinity of the ATP-hydrolyzing subunit KdpB by the formation of a transient KdpB/KdpC/ATP ternary complex. This chain is Potassium-transporting ATPase KdpC subunit, found in Polynucleobacter asymbioticus (strain DSM 18221 / CIP 109841 / QLW-P1DMWA-1) (Polynucleobacter necessarius subsp. asymbioticus).